We begin with the raw amino-acid sequence, 990 residues long: Aminopeptidase Q (990 aa).

At 2 to 13 (GPPSSSGFYVSR) the chain is on the cytoplasmic side. The helical; Signal-anchor for type II membrane protein transmembrane segment at 14–34 (AVALLLAGLVAALLLALAVLA) threads the bilayer. Over 35–990 (ALYGHCERVP…RIAAWLRRNT (956 aa)) the chain is Lumenal. Residues 48–91 (LPGLRDLEAESSPPLRQKPTPTPKPSSARELAVTTTPSNWRPPG) are disordered. Residues asparagine 132 and asparagine 168 are each glycosylated (N-linked (GlcNAc...) asparagine). Glutamate 240 is a binding site for substrate. N-linked (GlcNAc...) asparagine glycosylation is found at asparagine 261, asparagine 288, asparagine 319, and asparagine 346. 379–383 (HAMEN) is a substrate binding site. Residue histidine 415 coordinates Zn(2+). Glutamate 416 functions as the Proton acceptor in the catalytic mechanism. Zn(2+) contacts are provided by histidine 419 and glutamate 438. Residue tyrosine 503 is the Proton donor of the active site. Residues asparagine 607 and asparagine 653 are each glycosylated (N-linked (GlcNAc...) asparagine).

It belongs to the peptidase M1 family. As to quaternary structure, homodimer. Zn(2+) is required as a cofactor. N-glycosylated. In terms of tissue distribution, specifically expressed in placenta and not in other tissues. Mainly found at the cell surface region of the extravillous trophoblasts. Detected on extravillous trophoblasts in the outer layer of the chorion laeve in the fetal membrane Not detected on either fetal amnionic epithelial cells or maternal decidual cells. Also detected in the migrating extravillous trophoblasts in the maternal decidual tissues (at protein level).

The protein localises to the membrane. Inhibited by bestatin. Metalloprotease which may be important for placentation by regulating biological activity of key peptides at the embryo-maternal interface. On synthetic substrates it shows a marked preference for Leu-4-methylcoumaryl-7-amide (Leu-MCA) over Met-MCA, Arg-LCA and Lys-LCA. Cleaves the N-terminal amino acid of several peptides such as angiotensin-3, kisspeptin-10 and endokinin C. The protein is Aminopeptidase Q of Homo sapiens (Human).